The following is a 182-amino-acid chain: ATP synthase subunit delta, organellar chromatophore (182 aa).

It belongs to the ATPase delta chain family. As to quaternary structure, F-type ATPases have 2 components, F(1) - the catalytic core - and F(0) - the membrane proton channel. F(1) has five subunits: alpha(3), beta(3), gamma(1), delta(1), epsilon(1). CF(0) has four main subunits: a(1), b(1), b'(1) and c(10-14). The alpha and beta chains form an alternating ring which encloses part of the gamma chain. F(1) is attached to F(0) by a central stalk formed by the gamma and epsilon chains, while a peripheral stalk is formed by the delta, b and b' chains.

The protein resides in the plastid. It localises to the organellar chromatophore thylakoid membrane. Functionally, f(1)F(0) ATP synthase produces ATP from ADP in the presence of a proton or sodium gradient. F-type ATPases consist of two structural domains, F(1) containing the extramembraneous catalytic core and F(0) containing the membrane proton channel, linked together by a central stalk and a peripheral stalk. During catalysis, ATP synthesis in the catalytic domain of F(1) is coupled via a rotary mechanism of the central stalk subunits to proton translocation. In terms of biological role, this protein is part of the stalk that links CF(0) to CF(1). It either transmits conformational changes from CF(0) to CF(1) or is implicated in proton conduction. This chain is ATP synthase subunit delta, organellar chromatophore, found in Paulinella chromatophora.